We begin with the raw amino-acid sequence, 366 residues long: Nucleoporin SEH1 (366 aa).

WD repeat units follow at residues 18-57, 63-104, 111-152, 161-209, 226-267, and 290-329; these read AHRD…NWRR, CHGG…TEKD, QWIR…RIYE, RWNL…VIYE, DMPC…TAIL, and GDQR…QWVK.

Belongs to the WD repeat SEC13 family. In terms of assembly, component of the nuclear pore complex (NPC). Probably part of the GATOR complex.

The protein localises to the nucleus. The protein resides in the nuclear pore complex. Its subcellular location is the lysosome membrane. In terms of biological role, probable component of the nuclear pore complex (NPC) which is involved in the trafficking of macromolecules between the cytoplasm and nucleus. As a component of the GATOR complex may function in the amino acid-sensing branch of the TORC1 signaling pathway. The chain is Nucleoporin SEH1 from Caenorhabditis briggsae.